The sequence spans 701 residues: DNA-directed RNA polymerase subunit beta' (701 aa).

4 residues coordinate Zn(2+): Cys76, Cys78, Cys94, and Cys97. Residues Asp511, Asp513, and Asp515 each contribute to the Mg(2+) site.

It belongs to the RNA polymerase beta' chain family. RpoC1 subfamily. In plastids the minimal PEP RNA polymerase catalytic core is composed of four subunits: alpha, beta, beta', and beta''. When a (nuclear-encoded) sigma factor is associated with the core the holoenzyme is formed, which can initiate transcription. Mg(2+) serves as cofactor. It depends on Zn(2+) as a cofactor.

Its subcellular location is the plastid. It is found in the chloroplast. The enzyme catalyses RNA(n) + a ribonucleoside 5'-triphosphate = RNA(n+1) + diphosphate. Functionally, DNA-dependent RNA polymerase catalyzes the transcription of DNA into RNA using the four ribonucleoside triphosphates as substrates. In Pelargonium hortorum (Common geranium), this protein is DNA-directed RNA polymerase subunit beta'.